The following is a 513-amino-acid chain: Glutamate--tRNA ligase 2 (513 aa).

The short motif at 11 to 21 is the 'HIGH' region element; sequence PSPSGFLHIGS. A 'KMSKS' region motif is present at residues 240–244; the sequence is KLSKR. Lysine 243 contributes to the ATP binding site.

This sequence belongs to the class-I aminoacyl-tRNA synthetase family. Glutamate--tRNA ligase type 1 subfamily. Monomer.

It is found in the cytoplasm. It carries out the reaction tRNA(Glu) + L-glutamate + ATP = L-glutamyl-tRNA(Glu) + AMP + diphosphate. Catalyzes the attachment of glutamate to tRNA(Glu) in a two-step reaction: glutamate is first activated by ATP to form Glu-AMP and then transferred to the acceptor end of tRNA(Glu). This chain is Glutamate--tRNA ligase 2, found in Rickettsia massiliae (strain Mtu5).